Here is a 298-residue protein sequence, read N- to C-terminus: HTH-type transcriptional regulator YhaJ (298 aa).

Residues 7–64 form the HTH lysR-type domain; that stretch reads LTLEALRVMDAIDRRGSFAAAADELGRVPSALSYTMQKLEEELDVVLFDRSGHRTKFT. The segment at residues 24 to 43 is a DNA-binding region (H-T-H motif); it reads FAAAADELGRVPSALSYTMQ.

The protein belongs to the LysR transcriptional regulatory family.

Positive regulator partially required for expression of genes in the locus of effacement (LEE) large pathogenicity island (PAI). Also partially responsible for expression of neighboring gene dlsT (yhaO) during late exponential growth. Binds to DNA of promoter 1 in LEE and DNA from the dlsT promoter region. The chain is HTH-type transcriptional regulator YhaJ (yhaJ) from Escherichia coli O157:H7.